Here is a 475-residue protein sequence, read N- to C-terminus: Ribulose bisphosphate carboxylase large chain (475 aa).

Positions 123 and 173 each coordinate substrate. Catalysis depends on Lys-175, which acts as the Proton acceptor. Lys-177 provides a ligand contact to substrate. Positions 201, 203, and 204 each coordinate Mg(2+). Residue Lys-201 is modified to N6-carboxylysine. Catalysis depends on His-294, which acts as the Proton acceptor. Substrate contacts are provided by Arg-295, His-327, and Ser-379.

It belongs to the RuBisCO large chain family. Type I subfamily. In terms of assembly, heterohexadecamer of 8 large chains and 8 small chains. Mg(2+) is required as a cofactor.

Its subcellular location is the plastid. The protein resides in the cyanelle. It catalyses the reaction 2 (2R)-3-phosphoglycerate + 2 H(+) = D-ribulose 1,5-bisphosphate + CO2 + H2O. The catalysed reaction is D-ribulose 1,5-bisphosphate + O2 = 2-phosphoglycolate + (2R)-3-phosphoglycerate + 2 H(+). RuBisCO catalyzes two reactions: the carboxylation of D-ribulose 1,5-bisphosphate, the primary event in carbon dioxide fixation, as well as the oxidative fragmentation of the pentose substrate in the photorespiration process. Both reactions occur simultaneously and in competition at the same active site. This is Ribulose bisphosphate carboxylase large chain from Cyanophora paradoxa.